A 296-amino-acid polypeptide reads, in one-letter code: Formamidopyrimidine-DNA glycosylase (296 aa).

Proline 2 functions as the Schiff-base intermediate with DNA in the catalytic mechanism. Glutamate 3 (proton donor) is an active-site residue. The active-site Proton donor; for beta-elimination activity is lysine 61. DNA is bound by residues histidine 104, arginine 123, and lysine 169. Residues 255–289 form an FPG-type zinc finger; the sequence is DAYGREGEPCRRCGAIMRREKFMNRSSFYCPRCQP. Arginine 279 serves as the catalytic Proton donor; for delta-elimination activity.

Belongs to the FPG family. In terms of assembly, monomer. Zn(2+) serves as cofactor.

The catalysed reaction is Hydrolysis of DNA containing ring-opened 7-methylguanine residues, releasing 2,6-diamino-4-hydroxy-5-(N-methyl)formamidopyrimidine.. The enzyme catalyses 2'-deoxyribonucleotide-(2'-deoxyribose 5'-phosphate)-2'-deoxyribonucleotide-DNA = a 3'-end 2'-deoxyribonucleotide-(2,3-dehydro-2,3-deoxyribose 5'-phosphate)-DNA + a 5'-end 5'-phospho-2'-deoxyribonucleoside-DNA + H(+). Its function is as follows. Involved in base excision repair of DNA damaged by oxidation or by mutagenic agents. Acts as a DNA glycosylase that recognizes and removes damaged bases. Has a preference for oxidized purines, such as 7,8-dihydro-8-oxoguanine (8-oxoG). Has AP (apurinic/apyrimidinic) lyase activity and introduces nicks in the DNA strand. Cleaves the DNA backbone by beta-delta elimination to generate a single-strand break at the site of the removed base with both 3'- and 5'-phosphates. This Mycobacterium sp. (strain JLS) protein is Formamidopyrimidine-DNA glycosylase.